The following is a 403-amino-acid chain: MASQPPPPPKPWETRRIPGTGPGPGPGPTFQSAELGPTLLTRPGQPTLTRVPPPILPRPSQQTGSGNLNTFRPAYSSFSSGYGAYGNSFYGSYSPYSYGYNGLGYNRLRIDDLPPSRFVQQAEESSRGAFQSIESIVHAFASVSMMMDATFSAVYNSFRAVLDVANHFSRLKIHFTKVFSAFALVRTIRYLYRRLQWMIGLRRGLENEDLWAESEGTVACLGAEDRAANSAKSWPIFLFFAVILGGPYLIWKLLSTHSDEVTDSTNWASGEDDHVVARAEYDFVAVSEEEISFRAGDMLNLALKEQQPRVRGWLLASLDGQTTGLIPANYVKILGKRRGRKTVESSRISKQQQSFTNTTLIKGATAADSLDDQEAAFESVFVETNKVPVASDSTGKNGDKQDL.

The span at 1–11 (MASQPPPPPKP) shows a compositional bias: pro residues. The segment at 1-69 (MASQPPPPPK…SQQTGSGNLN (69 aa)) is disordered. At 1–134 (MASQPPPPPK…SSRGAFQSIE (134 aa)) the chain is on the peroxisomal matrix side. Residues 59–69 (PSQQTGSGNLN) show a composition bias toward polar residues. A helical membrane pass occupies residues 135 to 155 (SIVHAFASVSMMMDATFSAVY). A targeting to peroxisomes region spans residues 145–233 (MMMDATFSAV…EDRAANSAKS (89 aa)). The Cytoplasmic segment spans residues 156–174 (NSFRAVLDVANHFSRLKIH). The chain crosses the membrane as a helical span at residues 175–192 (FTKVFSAFALVRTIRYLY). The interaction with PEX19 stretch occupies residues 175-196 (FTKVFSAFALVRTIRYLYRRLQ). Topologically, residues 193 to 233 (RRLQWMIGLRRGLENEDLWAESEGTVACLGAEDRAANSAKS) are peroxisomal matrix. A helical transmembrane segment spans residues 234–254 (WPIFLFFAVILGGPYLIWKLL). Topologically, residues 255 to 403 (STHSDEVTDS…TGKNGDKQDL (149 aa)) are cytoplasmic. One can recognise an SH3 domain in the interval 272-336 (DDHVVARAEY…PANYVKILGK (65 aa)). Residue serine 354 is modified to Phosphoserine.

This sequence belongs to the peroxin-13 family. As to quaternary structure, interacts (via SH3 domain) with PEX14 (via SH3-binding motif); forming the PEX13-PEX14 docking complex. Interacts with PEX19.

Its subcellular location is the peroxisome membrane. Functionally, component of the PEX13-PEX14 docking complex, a translocon channel that specifically mediates the import of peroxisomal cargo proteins bound to PEX5 receptor. The PEX13-PEX14 docking complex forms a large import pore which can be opened to a diameter of about 9 nm. Mechanistically, PEX5 receptor along with cargo proteins associates with the PEX14 subunit of the PEX13-PEX14 docking complex in the cytosol, leading to the insertion of the receptor into the organelle membrane with the concomitant translocation of the cargo into the peroxisome matrix. Involved in the import of PTS1- and PTS2-type containing proteins. The polypeptide is Peroxisomal membrane protein PEX13 (PEX13) (Bos taurus (Bovine)).